The sequence spans 142 residues: MQSLPDTRQQSFDEIYGPPENFLEIEVRNPRTHGIGRHMYTDYEIVCRTNIPAFKLRQSTVRRRYSDFEYFRDILERESARVTIPPLPGKVFTNRFSDDVIEGRRAGLEKFLKIVVGHPLLQTGSKVLAAFVQDPNWDRNAW.

One can recognise a PX domain in the interval Asn-21–Asp-138. A 1,2-diacyl-sn-glycero-3-phospho-(1D-myo-inositol-3-phosphate)-binding residues include Arg-64, Ser-66, Lys-90, Arg-95, and Arg-104.

Belongs to the sorting nexin family.

The protein localises to the cytoplasm. It localises to the golgi apparatus membrane. It is found in the prevacuolar compartment membrane. Required for retention of late Golgi membrane proteins. Component of the retrieval machinery that functions by direct interaction with the cytosolic tails of certain TGN membrane proteins during the sorting/budding process at the prevacuolar compartment. Binds phosphatidylinositol 3-phosphate (PtdIns(P3)). The polypeptide is Sorting nexin-3 (snx-3) (Neurospora crassa (strain ATCC 24698 / 74-OR23-1A / CBS 708.71 / DSM 1257 / FGSC 987)).